Here is a 719-residue protein sequence, read N- to C-terminus: Developmental regulator flbA (719 aa).

Over residues 1–17 (MPTSISTAPLSQGSPPS) the composition is skewed to polar residues. 3 disordered regions span residues 1-39 (MPTSISTAPLSQGSPPSSLIDYQPQSVPSSSSPPPSTAA), 117-141 (IGSTTNSSLRQSASSGSLQKHSRKA), and 155-190 (LSPPLSDGSGSSEQSSSAPFEPLSAVTEQPNPAAER). Composition is skewed to low complexity over residues 123-135 (SSLRQSASSGSLQ) and 158-171 (PLSDGSGSSEQSSS). The interval 214-411 (QTSSRLLRMT…QDGPNVKSSV (198 aa)) is fungal-DR. One can recognise a DEP domain in the interval 425–511 (GLVGVKMARE…SKNAIYAITE (87 aa)). In terms of domain architecture, RGS spans 540 to 685 (SNNARLNHIL…FLRDPKYSAI (146 aa)). The disordered stretch occupies residues 694 to 719 (LIGGGRSYSPTPGNVPERSMSRSQRS).

Its function is as follows. Required for asexual sporulation and normal colony development. May be involved in brlA activation. Could play a regulatory role in controlling the flug-initiated signal transduction pathway that triggers the asexual reproduction. In Emericella nidulans (strain FGSC A4 / ATCC 38163 / CBS 112.46 / NRRL 194 / M139) (Aspergillus nidulans), this protein is Developmental regulator flbA (flbA).